The chain runs to 482 residues: tRNA sulfurtransferase (482 aa).

Positions 61–165 (LAIRDALTRI…DDRLLLIKGR (105 aa)) constitute a THUMP domain. ATP is bound by residues 183–184 (LI), K265, G287, and Q296. C344 and C456 are joined by a disulfide. The Rhodanese domain occupies 404–482 (FGPNDVILDI…GFNNVKVYRP (79 aa)). The Cysteine persulfide intermediate role is filled by C456.

It belongs to the ThiI family.

Its subcellular location is the cytoplasm. It catalyses the reaction [ThiI sulfur-carrier protein]-S-sulfanyl-L-cysteine + a uridine in tRNA + 2 reduced [2Fe-2S]-[ferredoxin] + ATP + H(+) = [ThiI sulfur-carrier protein]-L-cysteine + a 4-thiouridine in tRNA + 2 oxidized [2Fe-2S]-[ferredoxin] + AMP + diphosphate. The catalysed reaction is [ThiS sulfur-carrier protein]-C-terminal Gly-Gly-AMP + S-sulfanyl-L-cysteinyl-[cysteine desulfurase] + AH2 = [ThiS sulfur-carrier protein]-C-terminal-Gly-aminoethanethioate + L-cysteinyl-[cysteine desulfurase] + A + AMP + 2 H(+). It participates in cofactor biosynthesis; thiamine diphosphate biosynthesis. Catalyzes the ATP-dependent transfer of a sulfur to tRNA to produce 4-thiouridine in position 8 of tRNAs, which functions as a near-UV photosensor. Also catalyzes the transfer of sulfur to the sulfur carrier protein ThiS, forming ThiS-thiocarboxylate. This is a step in the synthesis of thiazole, in the thiamine biosynthesis pathway. The sulfur is donated as persulfide by IscS. This Shigella sonnei (strain Ss046) protein is tRNA sulfurtransferase.